The primary structure comprises 383 residues: N-acetyldiaminopimelate deacetylase (383 aa).

Asp-75 is a catalytic residue. Glu-134 acts as the Proton acceptor in catalysis.

This sequence belongs to the peptidase M20A family. N-acetyldiaminopimelate deacetylase subfamily.

The catalysed reaction is N-acetyl-(2S,6S)-2,6-diaminopimelate + H2O = (2S,6S)-2,6-diaminopimelate + acetate. It functions in the pathway amino-acid biosynthesis; L-lysine biosynthesis via DAP pathway; LL-2,6-diaminopimelate from (S)-tetrahydrodipicolinate (acetylase route): step 3/3. In terms of biological role, catalyzes the conversion of N-acetyl-diaminopimelate to diaminopimelate and acetate. The sequence is that of N-acetyldiaminopimelate deacetylase from Lactobacillus acidophilus (strain ATCC 700396 / NCK56 / N2 / NCFM).